Consider the following 80-residue polypeptide: Beta-toxin KAaH1 (80 aa).

Positions 1–22 (MMKLMLFSIIVILFSLIGSIHG) are cleaved as a signal peptide. The LCN-type CS-alpha/beta domain maps to 25-80 (VPGNYPLDSSDDTYLCAPLGENPFCIKICRKHGVKYGYCYAFQCWCEYLEDKNVKI). Disulfide bonds link C40–C63, C49–C68, and C53–C70.

The protein belongs to the long (3 C-C) scorpion toxin superfamily. Sodium/Potassium channel inhibitor family. Expressed by the venom gland.

The protein resides in the secreted. Inhibits the vertebrate potassium channels Kv1.1/KCNA1 and Kv1.3/KCNA3 in vitro with an IC(50) of 5.3 nM and 50.0 nM respectively. In Androctonus australis (Sahara scorpion), this protein is Beta-toxin KAaH1.